We begin with the raw amino-acid sequence, 379 residues long: Eukaryotic translation initiation factor 3 subunit M (379 aa).

The PCI domain maps to 179-341 (RSEEASKVMI…RKVIISSVAQ (163 aa)).

This sequence belongs to the eIF-3 subunit M family. As to quaternary structure, component of the eukaryotic translation initiation factor 3 (eIF-3) complex.

The protein resides in the cytoplasm. Its function is as follows. Component of the eukaryotic translation initiation factor 3 (eIF-3) complex, which is involved in protein synthesis of a specialized repertoire of mRNAs and, together with other initiation factors, stimulates binding of mRNA and methionyl-tRNAi to the 40S ribosome. The eIF-3 complex specifically targets and initiates translation of a subset of mRNAs involved in cell proliferation. In Nematostella vectensis (Starlet sea anemone), this protein is Eukaryotic translation initiation factor 3 subunit M.